The primary structure comprises 868 residues: Translation initiation factor IF-2 (868 aa).

2 disordered regions span residues 49 to 72 (LSKQ…TSTL) and 92 to 276 (KRSD…EHLK). A compositionally biased stretch (basic and acidic residues) spans 92–240 (KRSDIEEQQR…KKAEAEEVHL (149 aa)). In terms of domain architecture, tr-type G spans 368 to 537 (SRAPVVTIMG…VLQSELLDLQ (170 aa)). The tract at residues 377–384 (GHVDHGKT) is G1. Position 377–384 (377–384 (GHVDHGKT)) interacts with GTP. A G2 region spans residues 402 to 406 (GITQH). Positions 423-426 (DTPG) are G3. Residues 423–427 (DTPGH) and 477–480 (NKMD) contribute to the GTP site. Positions 477–480 (NKMD) are G4. Residues 513 to 515 (SAK) are G5.

Belongs to the TRAFAC class translation factor GTPase superfamily. Classic translation factor GTPase family. IF-2 subfamily.

Its subcellular location is the cytoplasm. In terms of biological role, one of the essential components for the initiation of protein synthesis. Protects formylmethionyl-tRNA from spontaneous hydrolysis and promotes its binding to the 30S ribosomal subunits. Also involved in the hydrolysis of GTP during the formation of the 70S ribosomal complex. In Alteromonas mediterranea (strain DSM 17117 / CIP 110805 / LMG 28347 / Deep ecotype), this protein is Translation initiation factor IF-2.